The following is a 132-amino-acid chain: Ribosome-binding factor A (132 aa).

It belongs to the RbfA family. Monomer. Binds 30S ribosomal subunits, but not 50S ribosomal subunits or 70S ribosomes.

It is found in the cytoplasm. In terms of biological role, one of several proteins that assist in the late maturation steps of the functional core of the 30S ribosomal subunit. Associates with free 30S ribosomal subunits (but not with 30S subunits that are part of 70S ribosomes or polysomes). Required for efficient processing of 16S rRNA. May interact with the 5'-terminal helix region of 16S rRNA. This chain is Ribosome-binding factor A, found in Pseudomonas putida (strain W619).